A 612-amino-acid polypeptide reads, in one-letter code: Threonine--tRNA ligase (612 aa).

The interval 218-509 (DHRKLGVELG…LSEHFGGNFP (292 aa)) is catalytic. Zn(2+) contacts are provided by Cys310, His361, and His486.

Belongs to the class-II aminoacyl-tRNA synthetase family. As to quaternary structure, homodimer. The cofactor is Zn(2+).

The protein localises to the cytoplasm. It carries out the reaction tRNA(Thr) + L-threonine + ATP = L-threonyl-tRNA(Thr) + AMP + diphosphate + H(+). In terms of biological role, catalyzes the attachment of threonine to tRNA(Thr) in a two-step reaction: L-threonine is first activated by ATP to form Thr-AMP and then transferred to the acceptor end of tRNA(Thr). Also edits incorrectly charged L-seryl-tRNA(Thr). The chain is Threonine--tRNA ligase from Helicobacter pylori (strain HPAG1).